Consider the following 280-residue polypeptide: MSLQFTKYQGLGNDFILIDNRNEATPLLTPEQAVDICDRHFGVGADGVIFLLPATGETDYTMRIFNSDGSEPEMCGNGIRCLARFAADLEGHALTATPRYRIHTLAGTITPQVRSDGQVTVDMGQPRLLAGEIPTTLKPAAEKVIAQPLQVGGRSWSVTCVSMGNPHCITFVENVAAIDLHTLGPQFEHHPAFPQRINTEFIEVIRPDYLKMRVWERGAGMTLACGTGACAALVAAVLNDLSEPRATVELPGGPLEIEWSAPGQAVLMTGPAEQVFQGVL.

Substrate is bound by residues Asn13 and Asn66. Catalysis depends on Cys75, which acts as the Proton donor. Substrate contacts are provided by residues 76 to 77, Asn165, Asn198, and 216 to 217; these read GN and ER. The active-site Proton acceptor is the Cys225. 226–227 contacts substrate; it reads GT.

It belongs to the diaminopimelate epimerase family. Homodimer.

The protein localises to the cytoplasm. The catalysed reaction is (2S,6S)-2,6-diaminopimelate = meso-2,6-diaminopimelate. Its pathway is amino-acid biosynthesis; L-lysine biosynthesis via DAP pathway; DL-2,6-diaminopimelate from LL-2,6-diaminopimelate: step 1/1. Functionally, catalyzes the stereoinversion of LL-2,6-diaminopimelate (L,L-DAP) to meso-diaminopimelate (meso-DAP), a precursor of L-lysine and an essential component of the bacterial peptidoglycan. This Cyanothece sp. (strain PCC 7425 / ATCC 29141) protein is Diaminopimelate epimerase.